The sequence spans 323 residues: Acetyl-coenzyme A carboxylase carboxyl transferase subunit alpha (323 aa).

Positions Arg-39–Gln-293 constitute a CoA carboxyltransferase C-terminal domain.

Belongs to the AccA family. In terms of assembly, acetyl-CoA carboxylase is a heterohexamer composed of biotin carboxyl carrier protein (AccB), biotin carboxylase (AccC) and two subunits each of ACCase subunit alpha (AccA) and ACCase subunit beta (AccD).

It localises to the cytoplasm. The enzyme catalyses N(6)-carboxybiotinyl-L-lysyl-[protein] + acetyl-CoA = N(6)-biotinyl-L-lysyl-[protein] + malonyl-CoA. It functions in the pathway lipid metabolism; malonyl-CoA biosynthesis; malonyl-CoA from acetyl-CoA: step 1/1. Functionally, component of the acetyl coenzyme A carboxylase (ACC) complex. First, biotin carboxylase catalyzes the carboxylation of biotin on its carrier protein (BCCP) and then the CO(2) group is transferred by the carboxyltransferase to acetyl-CoA to form malonyl-CoA. The protein is Acetyl-coenzyme A carboxylase carboxyl transferase subunit alpha of Burkholderia vietnamiensis (strain G4 / LMG 22486) (Burkholderia cepacia (strain R1808)).